Consider the following 299-residue polypeptide: Taste receptor type 2 member 1 (299 aa).

The Extracellular portion of the chain corresponds to 1–9 (MLESHLIIH). A helical transmembrane segment spans residues 10 to 30 (FLLAVIQFLLGTFTNGIIVVV). Residues 31–55 (NGIDLIKHRKMAPLDLLLSCLAVSR) lie on the Cytoplasmic side of the membrane. A helical membrane pass occupies residues 56–76 (IFLQLFIFYVNVIVIFFIEFI). Residues 77–81 (MCSEN) lie on the Extracellular side of the membrane. A helical membrane pass occupies residues 82-102 (CAILLFINELELWLATWLGVF). The Cytoplasmic segment spans residues 103–124 (YCAKVASVPHPLFIWLKMKISK). The helical transmembrane segment at 125–145 (LVPWMILGSLLYVSMTCVFHS) threads the bilayer. Topologically, residues 146–178 (KYAGFMVPYFLRNFFSQNATIQKEDTPAIQIFS) are extracellular. Residue N163 is glycosylated (N-linked (GlcNAc...) asparagine). A helical membrane pass occupies residues 179–199 (FVAEFLVPLLIFLVAVLLLIF). Over 200 to 222 (SLGRHTRQMRNTVAGSRVPGRGA) the chain is Cytoplasmic. Residues 223-243 (PISALLSILSFVILYFSHCMI) form a helical membrane-spanning segment. Over 244–257 (KVFLSSLKFHVRSF) the chain is Extracellular. The helical transmembrane segment at 258–278 (ILPFFILVIGIYPSGHSLILI) threads the bilayer. The Cytoplasmic portion of the chain corresponds to 279 to 299 (LGNXKLKQNAKKFLLHSKCCQ).

Belongs to the G-protein coupled receptor T2R family.

It localises to the membrane. Receptor that may play a role in the perception of bitterness and is gustducin-linked. May play a role in sensing the chemical composition of the gastrointestinal content. The activity of this receptor may stimulate alpha gustducin, mediate PLC-beta-2 activation and lead to the gating of TRPM5. The sequence is that of Taste receptor type 2 member 1 (TAS2R1) from Pongo pygmaeus (Bornean orangutan).